Consider the following 669-residue polypeptide: Epithelial sodium channel subunit gamma (669 aa).

Topologically, residues 1–67 (MAPPYHGDTR…VVSRGRLRKF (67 aa)) are cytoplasmic. Residues 68-88 (IWILLTLSAVGLILWQCAELI) form a helical membrane-spanning segment. At 89-551 (MSYYTASVSV…VILLSNFGGQ (463 aa)) the chain is on the extracellular side. Cystine bridges form between cysteine 113–cysteine 300, cysteine 223–cysteine 231, cysteine 277–cysteine 284, cysteine 389–cysteine 474, cysteine 411–cysteine 470, cysteine 415–cysteine 466, cysteine 424–cysteine 451, and cysteine 426–cysteine 440. A helical transmembrane segment spans residues 552–572 (LGLWMSCSMVCVIEIIEVFFI). At 573 to 669 (DSFSIVMRRR…LPDTLEGRSH (97 aa)) the chain is on the cytoplasmic side. A disordered region spans residues 592 to 619 (DRKAPRPQEPPQVNAPAKEGHDNPVCTD).

Belongs to the amiloride-sensitive sodium channel (TC 1.A.6) family. SCNN1G subfamily. Component of the heterotrimeric epithelial sodium channel (ENaC) composed of an alpha/SCNN1A, a beta/SCNN1B and a gamma/SCNN1G subunit.

The protein resides in the apical cell membrane. The catalysed reaction is Na(+)(in) = Na(+)(out). Its activity is regulated as follows. Originally identified and characterized by its inhibition by the diuretic drug amiloride. Functionally, this is one of the three pore-forming subunits of the heterotrimeric epithelial sodium channel (ENaC), a critical regulator of sodium balance and fluid homeostasis. ENaC operates in epithelial tissues, where it mediates the electrodiffusion of sodium ions from extracellular fluid through the apical membrane of cells, with water following osmotically. The protein is Epithelial sodium channel subunit gamma of Pelodiscus sinensis (Chinese softshell turtle).